The chain runs to 363 residues: Mitogen-activated protein kinase 13 (363 aa).

In terms of domain architecture, Protein kinase spans 33 to 319; that stretch reads IPPIEPIGRG…VDEALKQPYL (287 aa). ATP-binding positions include 39–47 and Lys-62; that span reads IGRGAYGIV. The active-site Proton acceptor is Asp-159. At Thr-191 the chain carries Phosphothreonine. Positions 191–193 match the TXY motif; it reads TEY. The residue at position 193 (Tyr-193) is a Phosphotyrosine. Position 196 is a phosphothreonine (Thr-196).

This sequence belongs to the protein kinase superfamily. CMGC Ser/Thr protein kinase family. MAP kinase subfamily. Interacts with MKK6. In terms of processing, dually phosphorylated on Thr-191 and Tyr-193, which activates the enzyme. In terms of tissue distribution, expressed in roots, stems and flower buds.

It catalyses the reaction L-seryl-[protein] + ATP = O-phospho-L-seryl-[protein] + ADP + H(+). It carries out the reaction L-threonyl-[protein] + ATP = O-phospho-L-threonyl-[protein] + ADP + H(+). With respect to regulation, activated by threonine and tyrosine phosphorylation. Activated by the MAP kinase kinase MKK6 in vitro. In terms of biological role, MKK6-MPK13 module positively regulates lateral root formation. The sequence is that of Mitogen-activated protein kinase 13 (MPK13) from Arabidopsis thaliana (Mouse-ear cress).